A 404-amino-acid chain; its full sequence is G1/S-specific cyclin-E2 (404 aa).

A disordered region spans residues 1–44 (MSRRSSRLQAKQQPQPSQTESPQEAQIIQAKKRKTTQDVKKRRE). The segment covering 12 to 26 (QQPQPSQTESPQEAQ) has biased composition (low complexity). At Ser21 the chain carries Phosphoserine. The segment covering 35–44 (TTQDVKKRRE) has biased composition (basic and acidic residues). Lys348 is subject to N6-lactoyllysine. Ser383 bears the Phosphoserine mark. Thr392 is subject to Phosphothreonine.

It belongs to the cyclin family. Cyclin E subfamily. In terms of assembly, interacts with the CDK2 (in vivo) and CDK3 (in vitro) protein kinases to form a serine/threonine kinase holoenzyme complex. The cyclin subunit imparts substrate specificity to the complex. In terms of processing, phosphorylation by CDK2 triggers its release from CDK2 and degradation via the ubiquitin proteasome pathway. Lactylated at Lys-348. Delactylated by SIRT3. In terms of tissue distribution, according to PubMed:9858585, highest levels of expression in adult testis, thymus and brain. Lower levels in placenta, spleen and colon. Consistently elevated levels in tumor-derived cells compared to non-transformed proliferating cells. According to PubMed:9840927: low levels in thymus, prostate, brain, skeletal muscle, and kidney. Elevated levels in lung. According to PubMed:9840943 highly expressed in testis, placenta, thymus and brain. In a lesser extent in small intestine and colon.

The protein localises to the nucleus. In terms of biological role, essential for the control of the cell cycle at the late G1 and early S phase. This Homo sapiens (Human) protein is G1/S-specific cyclin-E2 (CCNE2).